A 187-amino-acid polypeptide reads, in one-letter code: MKETKQEEMEVREDCESVDSNLEATVEEMESTKGTSEDLEQKLAEKTAQYEDIFSQFQRLQADFTNYKKRVEKEKGDIYLYANEKIALDLLNIIDNFERAIQSTEKTEENDSLLQGISLVYKQLLDTLTKHGVEEIEAMEKPFDMNLHYAVMQEESEGASNYVIDVLQKGYKIKDRILRPAMVKVSK.

The span at 1–15 shows a compositional bias: basic and acidic residues; the sequence is MKETKQEEMEVREDC. The tract at residues 1–40 is disordered; the sequence is MKETKQEEMEVREDCESVDSNLEATVEEMESTKGTSEDLE.

Belongs to the GrpE family. As to quaternary structure, homodimer.

The protein localises to the cytoplasm. In terms of biological role, participates actively in the response to hyperosmotic and heat shock by preventing the aggregation of stress-denatured proteins, in association with DnaK and GrpE. It is the nucleotide exchange factor for DnaK and may function as a thermosensor. Unfolded proteins bind initially to DnaJ; upon interaction with the DnaJ-bound protein, DnaK hydrolyzes its bound ATP, resulting in the formation of a stable complex. GrpE releases ADP from DnaK; ATP binding to DnaK triggers the release of the substrate protein, thus completing the reaction cycle. Several rounds of ATP-dependent interactions between DnaJ, DnaK and GrpE are required for fully efficient folding. This chain is Protein GrpE, found in Alkaliphilus oremlandii (strain OhILAs) (Clostridium oremlandii (strain OhILAs)).